The primary structure comprises 245 residues: 1-(5-phosphoribosyl)-5-[(5-phosphoribosylamino)methylideneamino] imidazole-4-carboxamide isomerase (245 aa).

Asp-7 serves as the catalytic Proton acceptor. The active-site Proton donor is Asp-129.

The protein belongs to the HisA/HisF family.

The protein localises to the cytoplasm. The enzyme catalyses 1-(5-phospho-beta-D-ribosyl)-5-[(5-phospho-beta-D-ribosylamino)methylideneamino]imidazole-4-carboxamide = 5-[(5-phospho-1-deoxy-D-ribulos-1-ylimino)methylamino]-1-(5-phospho-beta-D-ribosyl)imidazole-4-carboxamide. Its pathway is amino-acid biosynthesis; L-histidine biosynthesis; L-histidine from 5-phospho-alpha-D-ribose 1-diphosphate: step 4/9. The chain is 1-(5-phosphoribosyl)-5-[(5-phosphoribosylamino)methylideneamino] imidazole-4-carboxamide isomerase from Shewanella sp. (strain MR-4).